Consider the following 803-residue polypeptide: E3 ubiquitin-protein ligase UHRF2 (803 aa).

In terms of domain architecture, Ubiquitin-like spans 1-78 (MWIQVRTIDG…IQLLVRPDSS (78 aa)). Polar residues-rich tracts occupy residues 79–96 (LPSTSKQNDAQVKPSSHN), 106–115 (GGSSSQPSTS), 167–181 (KNGSSYKRTNGNVNH), and 189–200 (KLDNVPSTSNSD). Disordered stretches follow at residues 79–115 (LPSTSKQNDAQVKPSSHNPPKVKKTARGGSSSQPSTS) and 154–200 (RASD…SNSD). The segment at 118 to 312 (TCLIDPGFGL…VDEIFKIEKP (195 aa)) is required for interaction with histone H3. Positions 195 to 289 (STSNSDSVAA…KEVRVKVFLG (95 aa)) are interaction with PCNP. The PHD-type zinc finger occupies 340-396 (DKTCHMCSCHKCGEKRDPNMQLLCDECNMAYHIYCLSPPLDKVPEEEYWYCPSCKTD). Residues 415–645 (KMPSASTESR…LQYPAGYPSE (231 aa)) are methyl-CpG binding and interaction with HDAC1. The 165-residue stretch at 449 to 613 (GPIPGIPVGS…FLVWRYLLRR (165 aa)) folds into the YDG domain. The segment at 643-676 (PSEKEGKKTKGQSKKQGSEATKRPASDDECPGDS) is disordered. Over residues 658–668 (QGSEATKRPAS) the composition is skewed to basic and acidic residues. Serine 668 carries the phosphoserine modification. The segment at 734–773 (CVCCQELVYQPVTTECFHNVCKDCLQRSFKAQVFSCPACR) adopts an RING-type zinc-finger fold.

As to quaternary structure, homodimer; disulfide-linked. Binds methylated CpG containing oligonucleotides. Interacts with H3; the interaction has a preference for the 'Lys-9' trimethylated form of H3 (H3K9me3). Interacts with PCNP. Interacts with HDAC1. Interacts directly with CCNE1; the interaction ubiquitinates CCNE1 and appears independent of CCNE1 phosphorylation. Interacts with CCND1; the interaction ubiquitinates CCND1 and appears independent of CCND1 phosphorylation. Interacts with p53/TP53 and RB1. Interacts with UBE2I. Interacts with ZNF618. Interacts with UHRF1. Interacts with FANCD2. Interacts with ATR. Interacts with PCNA. May be autoubiquitinated; which may lead to proteasomal degradation. In terms of processing, phosphorylated. Phosphorylation may be mediated by CDK2. Post-translationally, autosumoylated. As to expression, mostly detected in several tissues, including the thymus, spleen, lung, adrenal gland, and ovary. In addition, found in several tissues in the brain (cerebellum, hippocampus, and cerebral cortex).

It localises to the nucleus. It is found in the chromosome. It catalyses the reaction S-ubiquitinyl-[E2 ubiquitin-conjugating enzyme]-L-cysteine + [acceptor protein]-L-lysine = [E2 ubiquitin-conjugating enzyme]-L-cysteine + N(6)-ubiquitinyl-[acceptor protein]-L-lysine.. The protein operates within protein modification; protein ubiquitination. Its activity is regulated as follows. E3 ligase activity is robustly activated by 5-hydroxy-methylcytosine. Its function is as follows. E3 ubiquitin ligase that plays important roles in DNA methylation, histone modifications, cell cycle and DNA repair. Acts as a specific reader for 5-hydroxymethylcytosine (5hmC) and thereby recruits various substrates to these sites to ubiquitinate them. This activity also allows the maintenance of 5mC levels at specific genomic loci and regulates neuron-related gene expression. Participates in cell cycle regulation by ubiquitinating cyclins CCND1 and CCNE1 and thus inducing G1 arrest. Also ubiquitinates PCNP leading to its degradation by the proteasome. Plays an active role in DNA damage repair by ubiquitinating p21/CDKN1A leading to its proteasomal degradation. Also promotes DNA repair by acting as an interstrand cross-links (ICLs) sensor. Mechanistically, cooperates with UHRF1 to ensure recruitment of FANCD2 to ICLs, leading to FANCD2 monoubiquitination and subsequent activation. Contributes to UV-induced DNA damage response by physically interacting with ATR in response to irradiation, thereby promoting ATR activation. This is E3 ubiquitin-protein ligase UHRF2 (Uhrf2) from Mus musculus (Mouse).